Here is a 481-residue protein sequence, read N- to C-terminus: MVQLNQNFINTIAQELPAHLSMDDFIAACSRPLRRSIRVNTLKISSEDFKQLMQPKGWTFDPIPWCEDGFWISYDEEEQLGNALEHIQGLFYIQEASSMLPPTALFTPNADWQCVLDLASAPGSKTTQMAALMNNQGLLVANEYSASRVKVLHANVLRMGASHCALTHFDGRVFGEYLYESFDAVLIDAPCGGEGIVRKDADALKSWSLDEVLEISETQKALIESAFLALKPGGSLVYSTCTLNRHENQGVCEYLQQTYGDAVQFESLNQLFDGAEKATTPEGFLHVWPQIYDSEGFFVAKLTKTRSVPRLQPEPKLQKNFPFTEASAKQAKAIQAYFADDLGIELPDDLIMVRDDEFWLFPHEFRDFIGKMRFQRIGVKLADHSKHGFKVRHEAIIALAGKALTAATNGAKVVDVSDEQAKEYLMGRDIPLDTAGKAQGEVIVCYGGAPLGMAKHLGNKLKNSLPRDLVKDKVLLLPPQA.

S-adenosyl-L-methionine is bound by residues 119–125 (ASAPGSK), Glu-143, Asp-170, and Asp-188. The Nucleophile role is filled by Cys-241.

This sequence belongs to the class I-like SAM-binding methyltransferase superfamily. RsmB/NOP family.

The protein localises to the cytoplasm. The enzyme catalyses cytidine(1407) in 16S rRNA + S-adenosyl-L-methionine = 5-methylcytidine(1407) in 16S rRNA + S-adenosyl-L-homocysteine + H(+). Specifically methylates the cytosine at position 1407 (m5C1407) of 16S rRNA. The chain is Ribosomal RNA small subunit methyltransferase F from Shewanella sp. (strain MR-4).